The sequence spans 31 residues: Delta-conotoxin-like ErVIA (31 aa).

Positions 1-4 (LNKR) are excised as a propeptide. Disulfide bonds link C5-C21, C12-C25, and C20-C29.

It belongs to the conotoxin O1 superfamily. As to expression, expressed by the venom duct.

The protein resides in the secreted. In terms of biological role, this toxin activates voltage-gated sodium channels. It shifts the voltage-dependence of activation to more hyperpolarized potentials but has only little effect on channel inactivation. It is active on Nav1.3/SCN3A (EC(50)=3.98 nM), Nav1.4/SCN4A (EC(50)=4.99 nM), Nav1.6/SCN8A (EC(50)=1.27 nM) and Nav1.7/SCN9A (EC(50)=2.42 nM) voltage-gated sodium channels. In vivo, it induces nocifensive or pain-like behaviors in mice when injected intraplantarly. In Conus eburneus (Ivory cone), this protein is Delta-conotoxin-like ErVIA.